A 201-amino-acid polypeptide reads, in one-letter code: MAEKFIKHTGLVVPLDAANVDTDAIIPKQFLQKVTRTGFGAHLFNDWRFLDEKGQQPNPDFVLNFPQYQGASILLARENFGCGSSREHAPWALTDYGFKVVIAPSFADIFYGNSFNNQLLPVKLSDAEVDELFALVKANPGIHFDVDLEAQEVKAGEKTYRFTIDAFRRHCMMNGLDSIGLTLQHDDAIASYEEKQPAFMR.

It belongs to the LeuD family. LeuD type 1 subfamily. As to quaternary structure, heterodimer of LeuC and LeuD.

It catalyses the reaction (2R,3S)-3-isopropylmalate = (2S)-2-isopropylmalate. It functions in the pathway amino-acid biosynthesis; L-leucine biosynthesis; L-leucine from 3-methyl-2-oxobutanoate: step 2/4. In terms of biological role, catalyzes the isomerization between 2-isopropylmalate and 3-isopropylmalate, via the formation of 2-isopropylmaleate. The sequence is that of 3-isopropylmalate dehydratase small subunit from Escherichia coli O45:K1 (strain S88 / ExPEC).